A 314-amino-acid polypeptide reads, in one-letter code: Trihelix transcription factor ASR3 (314 aa).

Residues 1 to 34 (MALEQLGLGVSAVDGGENSSAPSNDGGDDGVKTA) form a disordered region. The 67-residue stretch at 38-104 (RWTRQEILVL…QCRKRWSNLA (67 aa)) folds into the Myb-like domain. Positions 84 to 91 (CKRHGVNR) match the Nuclear localization signal motif. The EAR 1 signature appears at 161 to 165 (LSLGL). At Thr-189 the chain carries Phosphothreonine; by MAPK4. The tract at residues 207 to 255 (CVADQGRVKEKQPEAANVEGGSTSQEERKRKRTSFGEKEEEEEEGETKK) is disordered. The EAR 2 signature appears at 280-284 (LNLKL).

In terms of assembly, homodimer. Interacts directly with MPK4. Post-translationally, phosphorylated on Thr-189 by MPK4 in response to microbe-associated molecular patterns (MAMPs, e.g. flg22, elf18, chitin, and LPS). This phosphorylation enhances DNA-binding and thus negatively regulates immune gene expression.

It is found in the nucleus. In terms of biological role, transcriptional repressor that binds DNA and plays a negative role in regulating microbe-associated molecular patterns-(MAMPs, e.g. flg22, elf18, chitin, and LPS) triggered immunity (PTI) by negatively regulating immune gene expression. The protein is Trihelix transcription factor ASR3 of Arabidopsis thaliana (Mouse-ear cress).